The sequence spans 104 residues: Large ribosomal subunit protein bL21 (104 aa).

This sequence belongs to the bacterial ribosomal protein bL21 family. In terms of assembly, part of the 50S ribosomal subunit. Contacts protein L20.

Its function is as follows. This protein binds to 23S rRNA in the presence of protein L20. The polypeptide is Large ribosomal subunit protein bL21 (Tropheryma whipplei (strain Twist) (Whipple's bacillus)).